A 522-amino-acid polypeptide reads, in one-letter code: Peptide chain release factor 3 (522 aa).

The region spanning 10-277 is the tr-type G domain; it reads ASRKTFAIIS…TFVDFAPAPS (268 aa). Residues 19-26, 87-91, and 141-144 contribute to the GTP site; these read SHPDAGKT, DTPGH, and NKMD.

This sequence belongs to the TRAFAC class translation factor GTPase superfamily. Classic translation factor GTPase family. PrfC subfamily.

It localises to the cytoplasm. Functionally, increases the formation of ribosomal termination complexes and stimulates activities of RF-1 and RF-2. It binds guanine nucleotides and has strong preference for UGA stop codons. It may interact directly with the ribosome. The stimulation of RF-1 and RF-2 is significantly reduced by GTP and GDP, but not by GMP. This is Peptide chain release factor 3 from Listeria welshimeri serovar 6b (strain ATCC 35897 / DSM 20650 / CCUG 15529 / CIP 8149 / NCTC 11857 / SLCC 5334 / V8).